Reading from the N-terminus, the 2120-residue chain is Alpha-tectorin (2120 aa).

The N-terminal stretch at 1–24 (MNTRSLLSAWAALLVVTVRHRAHA) is a signal peptide. N-linked (GlcNAc...) asparagine glycans are attached at residues Asn-34, Asn-215, Asn-258, Asn-277, Asn-445, and Asn-496. The NIDO domain maps to 98–252 (PFCGDVANGI…GRWAFKIDGR (155 aa)). One can recognise a VWFC domain in the interval 260–312 (SLRGQFLHQGEIFWENSNCSTKCRCLDFNNEIFCQEMLAPFETVEPKIKFFQC). One can recognise a VWFD 1 domain in the interval 317 to 490 (TACVVFGDPH…RVPHPERKCS (174 aa)). Cystine bridges form between Cys-319–Cys-451 and Cys-341–Cys-489. The TIL 1 domain maps to 578–620 (PGHSHYSGCASGCPATCSDLTAPLRCTAPCPEGCECDDGHVLS). Asn-666, Asn-792, Asn-822, Asn-834, Asn-877, Asn-899, Asn-907, and Asn-928 each carry an N-linked (GlcNAc...) asparagine glycan. The 176-residue stretch at 690 to 865 (GLCSVGQNQV…SWTTFDEICN (176 aa)) folds into the VWFD 2 domain. An intrachain disulfide couples Cys-692 to Cys-828. The region spanning 963 to 1013 (CPENSHFEECMSCVETCETLATGCCMDTCTEGCQCDEGFALRSPCVPRGEC) is the TIL 2 domain. N-linked (GlcNAc...) asparagine glycans are attached at residues Asn-1025, Asn-1041, Asn-1207, and Asn-1337. In terms of domain architecture, VWFD 3 spans 1066-1250 (ASCIVSGYGH…SWAKRDTFCR (185 aa)). Cystine bridges form between Cys-1068/Cys-1213 and Cys-1090/Cys-1249. The region spanning 1345 to 1398 (CPPNSHYESCVSLCQPRCAAIRLKSDCGHYCVEGCQCDPGYVLNGKSCILPQNC) is the TIL 3 domain. Positions 1458–1633 (SFCLAAGGGV…KTNGMQKSCN (176 aa)) constitute a VWFD 4 domain. 7 disulfides stabilise this stretch: Cys-1460–Cys-1594, Cys-1482–Cys-1632, Cys-1684–Cys-1742, Cys-1708–Cys-1751, Cys-1753–Cys-1785, Cys-1773–Cys-1865, and Cys-1804–Cys-1824. 10 N-linked (GlcNAc...) asparagine glycosylation sites follow: Asn-1511, Asn-1537, Asn-1723, Asn-1739, Asn-1761, Asn-1818, Asn-1831, Asn-1847, Asn-1887, and Asn-1906. Residues 1772–2026 (TCKAAQMEVS…YSCKINCPQH (255 aa)) enclose the ZP domain. 3 disulfides stabilise this stretch: Cys-1947–Cys-2007, Cys-1968–Cys-2023, and Cys-2012–Cys-2019. Residue Asn-2058 is the site of GPI-anchor amidated asparagine attachment. The propeptide at 2059–2120 (GGCEQICTSQ…LWAALHDPTS (62 aa)) is removed in mature form.

In terms of assembly, may form homomeric filament after self-association or heteromeric filament after association with beta-tectorin. In terms of processing, at least 3 products of tectorin seem to exist: HMM, MMM and LMM. They may be generated by active processing or the result of proteolysis occurring between intrachain disulfide bonds. Post-translationally, the presence of a hydrophobic C-terminus preceded by a potential cleavage site strongly suggests that tectorins are synthesized as glycosylphosphatidylinositol-linked, membrane-bound precursors. Tectorins are targeted to the apical surface of the inner ear epithelia by the lipid and proteolytically released into the extracellular compartment. In terms of tissue distribution, expressed in the inner ear.

The protein localises to the cell membrane. It is found in the secreted. It localises to the extracellular space. Its subcellular location is the extracellular matrix. One of the major non-collagenous components of the tectorial membrane. The tectorial membrane is an extracellular matrix of the inner ear that covers the neuroepithelium of the cochlea and contacts the stereocilia bundles of specialized sensory hair cells. Sound induces movement of these hair cells relative to the tectorial membrane, deflects the stereocilia and leads to fluctuations in hair-cell membrane potential, transducing sound into electrical signals. The sequence is that of Alpha-tectorin (TECTA) from Gallus gallus (Chicken).